The sequence spans 6919 residues: Nonribosomal peptide synthetase easA (6919 aa).

The Carrier 1 domain occupies Thr17 to Glu93. Residue Ser54 is modified to O-(pantetheine 4'-phosphoryl)serine. Residues Glu123–Met427 are epimerization 1. Residues Phe294 to Asn319 form a disordered region. Positions Asn304–Asn319 are enriched in basic and acidic residues. Positions Leu604–Leu981 are condensation 1. The interval Gln1003 to Arg1394 is adenylation 1. The 78-residue stretch at Glu1531–Asp1608 folds into the Carrier 2 domain. Residue Ser1569 is modified to O-(pantetheine 4'-phosphoryl)serine. Residues Leu1617 to Glu2031 are epimerization 2. Positions Val2072–Lys2509 are condensation 2. The tract at residues Arg2541–Arg2930 is adenylation 2. The 77-residue stretch at Ala3067–Met3143 folds into the Carrier 3 domain. The residue at position 3104 (Ser3104) is an O-(pantetheine 4'-phosphoryl)serine. Residues Glu3188–Leu3599 form a condensation 3 region. An adenylation 3 region spans residues Gln3620 to Arg4018. In terms of domain architecture, Carrier 4 spans Thr4151 to Thr4228. Residue Ser4188 is modified to O-(pantetheine 4'-phosphoryl)serine. The tract at residues Glu4282–Val4708 is condensation 4. The segment at Glu4732–Arg5133 is adenylation 4. Positions Ala5260–Glu5337 constitute a Carrier 5 domain. Residue Ser5296 is modified to O-(pantetheine 4'-phosphoryl)serine. The tract at residues Glu5380–Asn5775 is condensation 5. The adenylation 5 stretch occupies residues Ser5824–Ile6216. A Carrier 6 domain is found at Glu6344–Thr6421. Ser6381 carries the post-translational modification O-(pantetheine 4'-phosphoryl)serine.

It participates in antibiotic biosynthesis. Its function is as follows. Nonribosomal peptide synthetase; part of the gene cluster that mediates the biosynthesis of emericellamides, secondary metabolites acting as antibiotics. The biosynthesis of emericellamides initiates from the highly reducing polyketide synthase easB which catalyzes the formation of the linear polyketide chain. EasB produces several polyketides that can be further processed by the downstream enzymes. The polyketides are released from easB as linear polyketide carboxylic acids, which are converted to CoA thioesters by the acyl-CoA ligase easD. The substrates are then loaded onto the acyltransferase easC, which shuttles them to the first thiolation (T) domain of the nonribosomal peptide synthetase easA. EasA then performs condensation of the polyketides with one glycine, two alanine, one valine and one leucine residues. A last step of cyclization leads to the production of emericellamides. This Emericella nidulans (strain FGSC A4 / ATCC 38163 / CBS 112.46 / NRRL 194 / M139) (Aspergillus nidulans) protein is Nonribosomal peptide synthetase easA.